Here is a 245-residue protein sequence, read N- to C-terminus: 5-oxoprolinase subunit A (245 aa).

The protein belongs to the LamB/PxpA family. Forms a complex composed of PxpA, PxpB and PxpC.

The enzyme catalyses 5-oxo-L-proline + ATP + 2 H2O = L-glutamate + ADP + phosphate + H(+). Catalyzes the cleavage of 5-oxoproline to form L-glutamate coupled to the hydrolysis of ATP to ADP and inorganic phosphate. The sequence is that of 5-oxoprolinase subunit A from Yersinia enterocolitica serotype O:8 / biotype 1B (strain NCTC 13174 / 8081).